A 248-amino-acid polypeptide reads, in one-letter code: Ribosomal RNA small subunit methyltransferase A (248 aa).

Residues His11, Leu13, Gly38, Glu60, Asp83, and Asn101 each coordinate S-adenosyl-L-methionine.

The protein belongs to the class I-like SAM-binding methyltransferase superfamily. rRNA adenine N(6)-methyltransferase family. RsmA subfamily.

The protein localises to the cytoplasm. The enzyme catalyses adenosine(1518)/adenosine(1519) in 16S rRNA + 4 S-adenosyl-L-methionine = N(6)-dimethyladenosine(1518)/N(6)-dimethyladenosine(1519) in 16S rRNA + 4 S-adenosyl-L-homocysteine + 4 H(+). Specifically dimethylates two adjacent adenosines (A1518 and A1519) in the loop of a conserved hairpin near the 3'-end of 16S rRNA in the 30S particle. May play a critical role in biogenesis of 30S subunits. The chain is Ribosomal RNA small subunit methyltransferase A from Aquifex aeolicus (strain VF5).